Reading from the N-terminus, the 92-residue chain is Small ribosomal subunit protein uS17 (92 aa).

This sequence belongs to the universal ribosomal protein uS17 family. In terms of assembly, part of the 30S ribosomal subunit.

Functionally, one of the primary rRNA binding proteins, it binds specifically to the 5'-end of 16S ribosomal RNA. The sequence is that of Small ribosomal subunit protein uS17 from Corynebacterium diphtheriae (strain ATCC 700971 / NCTC 13129 / Biotype gravis).